We begin with the raw amino-acid sequence, 242 residues long: UPF0273 protein TM_0370 (242 aa).

The KaiC domain maps to 3–242; it reads KRVKTGIPGM…IYPSEGGEGR (240 aa). 30–37 contacts ATP; that stretch reads GGPGTGKT.

This sequence belongs to the UPF0273 family.

The polypeptide is UPF0273 protein TM_0370 (Thermotoga maritima (strain ATCC 43589 / DSM 3109 / JCM 10099 / NBRC 100826 / MSB8)).